Consider the following 361-residue polypeptide: [LysW]-lysine hydrolase (361 aa).

Histidine 67 is a binding site for Zn(2+). The active site involves aspartate 69. Zn(2+) is bound at residue aspartate 91. Glutamate 124 (proton acceptor) is an active-site residue. Zn(2+) is bound by residues glutamate 125, glutamate 148, and histidine 326.

This sequence belongs to the peptidase M20A family. LysK subfamily. Homotetramer and homooctamer. It depends on Zn(2+) as a cofactor. Requires Co(2+) as cofactor.

It localises to the cytoplasm. It carries out the reaction [amino-group carrier protein]-C-terminal-gamma-(L-lysyl)-L-glutamate + H2O = [amino-group carrier protein]-C-terminal-L-glutamate + L-lysine. The protein operates within amino-acid biosynthesis; L-lysine biosynthesis via AAA pathway; L-lysine from L-alpha-aminoadipate (Thermus route): step 5/5. Its function is as follows. Catalyzes the release of L-lysine from [LysW]-gamma-L-lysine. In vitro, can deacetylate both N(2)-acetyl-L-lysine and N(2)-acetyl-L-ornithine. The protein is [LysW]-lysine hydrolase of Thermus thermophilus (strain ATCC BAA-163 / DSM 7039 / HB27).